Consider the following 545-residue polypeptide: CTP synthase (545 aa).

An amidoligase domain region spans residues 1–267 (MTKFIFVTGG…AEQTLKLLQM (267 aa)). Residue Ser13 coordinates CTP. Ser13 is a UTP binding site. ATP is bound by residues 14–19 (SIGKGI) and Asp71. 2 residues coordinate Mg(2+): Asp71 and Glu141. Residues 148-150 (DIE), 188-193 (KTKPTQ), and Lys224 each bind CTP. Residues 188–193 (KTKPTQ) and Lys224 each bind UTP. A Glutamine amidotransferase type-1 domain is found at 292–534 (EIAIVGKYVS…VQAAIAQSHP (243 aa)). Gly354 contributes to the L-glutamine binding site. The active-site Nucleophile; for glutamine hydrolysis is the Cys381. Residues 382 to 385 (LGMQ), Glu405, and Arg462 each bind L-glutamine. Catalysis depends on residues His507 and Glu509.

Belongs to the CTP synthase family. As to quaternary structure, homotetramer.

It catalyses the reaction UTP + L-glutamine + ATP + H2O = CTP + L-glutamate + ADP + phosphate + 2 H(+). The enzyme catalyses L-glutamine + H2O = L-glutamate + NH4(+). It carries out the reaction UTP + NH4(+) + ATP = CTP + ADP + phosphate + 2 H(+). It participates in pyrimidine metabolism; CTP biosynthesis via de novo pathway; CTP from UDP: step 2/2. With respect to regulation, allosterically activated by GTP, when glutamine is the substrate; GTP has no effect on the reaction when ammonia is the substrate. The allosteric effector GTP functions by stabilizing the protein conformation that binds the tetrahedral intermediate(s) formed during glutamine hydrolysis. Inhibited by the product CTP, via allosteric rather than competitive inhibition. Its function is as follows. Catalyzes the ATP-dependent amination of UTP to CTP with either L-glutamine or ammonia as the source of nitrogen. Regulates intracellular CTP levels through interactions with the four ribonucleotide triphosphates. This Trichormus variabilis (strain ATCC 29413 / PCC 7937) (Anabaena variabilis) protein is CTP synthase.